We begin with the raw amino-acid sequence, 337 residues long: GTPase Obg (337 aa).

Residues 4 to 162 (SNFVDYAKIH…RQIVFQLKLL (159 aa)) form the Obg domain. One can recognise an OBG-type G domain in the interval 163-329 (ADVGLVGFPN…LKDLLWEKLR (167 aa)). GTP-binding positions include 169–176 (GFPNTGKS), 194–198 (FTTLE), 216–219 (DIPG), 283–286 (SKSD), and 310–312 (SSF). Mg(2+) contacts are provided by Ser176 and Thr196.

This sequence belongs to the TRAFAC class OBG-HflX-like GTPase superfamily. OBG GTPase family. In terms of assembly, monomer. The cofactor is Mg(2+).

The protein localises to the cytoplasm. An essential GTPase which binds GTP, GDP and possibly (p)ppGpp with moderate affinity, with high nucleotide exchange rates and a fairly low GTP hydrolysis rate. Plays a role in control of the cell cycle, stress response, ribosome biogenesis and in those bacteria that undergo differentiation, in morphogenesis control. The protein is GTPase Obg of Azobacteroides pseudotrichonymphae genomovar. CFP2.